Consider the following 359-residue polypeptide: Stearoyl-CoA desaturase (359 aa).

At 1 to 72 (MPAHLLQEEI…EGPKPKLEYV (72 aa)) the chain is on the cytoplasmic side. Residues 73 to 93 (WRNIILMGLLHLGALYGITLI) traverse the membrane as a helical segment. Substrate is bound at residue asparagine 75. The Lumenal portion of the chain corresponds to 94-97 (PTCK). The chain crosses the membrane as a helical span at residues 98 to 118 (IYTFLWVLFYYMMSALGITAG). Residues 119-217 (VHRLWSHRTY…EKLVMFQRRY (99 aa)) lie on the Cytoplasmic side of the membrane. Fe cation is bound by residues histidine 120 and histidine 125. The Histidine box-1 motif lies at 120–125 (HRLWSH). Asparagine 148, arginine 155, and aspartate 156 together coordinate substrate. Fe cation is bound by residues histidine 157, histidine 160, and histidine 161. The Histidine box-2 motif lies at 157 to 161 (HRAHH). Positions 188 and 189 each coordinate substrate. Residue serine 203 is modified to Phosphoserine. The chain crosses the membrane as a helical span at residues 218-237 (YKPGVLLLCFILPTLVPWYL). Over 238-241 (WGET) the chain is Lumenal. Residues 242–263 (FQNSLFFATLLRYAVVLNATWL) traverse the membrane as a helical segment. Tryptophan 262 lines the substrate pocket. The Cytoplasmic portion of the chain corresponds to 264–359 (VNSAAHMYGY…RTGEESCKSG (96 aa)). Fe cation is bound by residues histidine 269, histidine 298, histidine 301, and histidine 302. A Histidine box-3 motif is present at residues 298–302 (HNYHH).

Belongs to the fatty acid desaturase type 1 family. Requires Fe(2+) as cofactor.

The protein resides in the endoplasmic reticulum membrane. The catalysed reaction is octadecanoyl-CoA + 2 Fe(II)-[cytochrome b5] + O2 + 2 H(+) = (9Z)-octadecenoyl-CoA + 2 Fe(III)-[cytochrome b5] + 2 H2O. It catalyses the reaction hexadecanoyl-CoA + 2 Fe(II)-[cytochrome b5] + O2 + 2 H(+) = (9Z)-hexadecenoyl-CoA + 2 Fe(III)-[cytochrome b5] + 2 H2O. Its function is as follows. Stearoyl-CoA desaturase that utilizes O(2) and electrons from reduced cytochrome b5 to introduce the first double bond into saturated fatty acyl-CoA substrates. Catalyzes the insertion of a cis double bond at the delta-9 position into fatty acyl-CoA substrates including palmitoyl-CoA and stearoyl-CoA. Gives rise to a mixture of 16:1 and 18:1 unsaturated fatty acids. Plays an important role in lipid biosynthesis. Plays an important role in regulating the expression of genes that are involved in lipogenesis and in regulating mitochondrial fatty acid oxidation. Plays an important role in body energy homeostasis. Contributes to the biosynthesis of membrane phospholipids, cholesterol esters and triglycerides. The polypeptide is Stearoyl-CoA desaturase (SCD) (Capra hircus (Goat)).